A 115-amino-acid polypeptide reads, in one-letter code: Large ribosomal subunit protein bL19 (115 aa).

The protein belongs to the bacterial ribosomal protein bL19 family.

Its function is as follows. This protein is located at the 30S-50S ribosomal subunit interface and may play a role in the structure and function of the aminoacyl-tRNA binding site. The chain is Large ribosomal subunit protein bL19 from Streptococcus pyogenes serotype M2 (strain MGAS10270).